The primary structure comprises 284 residues: 2-dehydro-3-deoxyphosphooctonate aldolase (284 aa).

Belongs to the KdsA family.

The protein resides in the cytoplasm. It carries out the reaction D-arabinose 5-phosphate + phosphoenolpyruvate + H2O = 3-deoxy-alpha-D-manno-2-octulosonate-8-phosphate + phosphate. It functions in the pathway carbohydrate biosynthesis; 3-deoxy-D-manno-octulosonate biosynthesis; 3-deoxy-D-manno-octulosonate from D-ribulose 5-phosphate: step 2/3. It participates in bacterial outer membrane biogenesis; lipopolysaccharide biosynthesis. In Burkholderia multivorans (strain ATCC 17616 / 249), this protein is 2-dehydro-3-deoxyphosphooctonate aldolase.